The chain runs to 456 residues: Nuclear distribution protein PAC1 (456 aa).

The LisH domain maps to 9-41; the sequence is QADELHKSIIAYLSANDLPNTAAALRAELNLTE. Residues 61–88 adopt a coiled-coil conformation; sequence TSIVRLQKKIMDLEARNAALQSELDNLT. 8 WD repeats span residues 114–153, 156–197, 201–240, 243–282, 288–348, 350–389, 394–437, and 439–456; these read SHRD…LEMT, GHTR…KNVR, GHDH…CVRS, GHTG…NPEN, GHEH…LMTL, GHDN…KCVK, AHDR…PDVQ, and RCVI…IFAA.

The protein belongs to the WD repeat LIS1/nudF family. In terms of assembly, self-associates. Interacts with NDL1 and dynein.

The protein resides in the cytoplasm. It localises to the cytoskeleton. The protein localises to the spindle pole. In terms of biological role, positively regulates the activity of the minus-end directed microtubule motor protein dynein. May enhance dynein-mediated microtubule sliding by targeting dynein to the microtubule plus end. Required for nuclear migration during vegetative growth as well as development. Required for retrograde early endosome (EE) transport from the hyphal tip. Required for localization of dynein to the mitotic spindle poles. Recruits additional proteins to the dynein complex at SPBs. The sequence is that of Nuclear distribution protein PAC1 from Ajellomyces capsulatus (strain H143) (Darling's disease fungus).